Reading from the N-terminus, the 317-residue chain is TPR repeat-containing thioredoxin TDX (317 aa).

Residues 1–48 (MATAGASSFEDEIMESDIELEGEAVEPDNDPPQKMGDPSVEVSDEKRD) are disordered. Acidic residues predominate over residues 9–29 (FEDEIMESDIELEGEAVEPDN). TPR repeat units follow at residues 50–83 (AQLC…NPTS), 85–117 (IAYA…NPDS), and 119–151 (KGYK…DYDE). In terms of domain architecture, Thioredoxin spans 189–316 (EKQRKHAEEV…LERKVAQHGS (128 aa)). Catalysis depends on nucleophile residues Cys-242 and Cys-245. An intrachain disulfide couples Cys-242 to Cys-245.

This sequence belongs to the thioredoxin family.

Probable thiol-disulfide oxidoreductase that may participate in various redox reactions and act as chaperone under heat shock. May interact with HSP70 proteins through the TPR repeats. The polypeptide is TPR repeat-containing thioredoxin TDX (Oryza sativa subsp. japonica (Rice)).